The primary structure comprises 235 residues: Uridylate kinase (235 aa).

12-15 (KISG) lines the ATP pocket. Residue Gly54 participates in UMP binding. ATP-binding residues include Gly55 and Arg59. Residues Asp72 and 133–140 (TGNPFFST) contribute to the UMP site. Residues Tyr166 and Asp169 each coordinate ATP.

It belongs to the UMP kinase family. Homohexamer.

The protein resides in the cytoplasm. The enzyme catalyses UMP + ATP = UDP + ADP. It functions in the pathway pyrimidine metabolism; CTP biosynthesis via de novo pathway; UDP from UMP (UMPK route): step 1/1. Its activity is regulated as follows. Inhibited by UTP. In terms of biological role, catalyzes the reversible phosphorylation of UMP to UDP. The protein is Uridylate kinase of Acetivibrio thermocellus (strain ATCC 27405 / DSM 1237 / JCM 9322 / NBRC 103400 / NCIMB 10682 / NRRL B-4536 / VPI 7372) (Clostridium thermocellum).